Here is a 342-residue protein sequence, read N- to C-terminus: Methylthioribose-1-phosphate isomerase (342 aa).

Residues 49-51 (RGA), arginine 86, and glutamine 187 contribute to the substrate site. The active-site Proton donor is aspartate 228. 238 to 239 (NK) contacts substrate.

It belongs to the eIF-2B alpha/beta/delta subunits family. MtnA subfamily.

It catalyses the reaction 5-(methylsulfanyl)-alpha-D-ribose 1-phosphate = 5-(methylsulfanyl)-D-ribulose 1-phosphate. It participates in amino-acid biosynthesis; L-methionine biosynthesis via salvage pathway; L-methionine from S-methyl-5-thio-alpha-D-ribose 1-phosphate: step 1/6. Its function is as follows. Catalyzes the interconversion of methylthioribose-1-phosphate (MTR-1-P) into methylthioribulose-1-phosphate (MTRu-1-P). This chain is Methylthioribose-1-phosphate isomerase, found in Citrobacter koseri (strain ATCC BAA-895 / CDC 4225-83 / SGSC4696).